The following is a 1372-amino-acid chain: DNA-directed RNA polymerase subunit beta (1372 aa).

The protein belongs to the RNA polymerase beta chain family. In terms of assembly, the RNAP catalytic core consists of 2 alpha, 1 beta, 1 beta' and 1 omega subunit. When a sigma factor is associated with the core the holoenzyme is formed, which can initiate transcription.

The enzyme catalyses RNA(n) + a ribonucleoside 5'-triphosphate = RNA(n+1) + diphosphate. DNA-dependent RNA polymerase catalyzes the transcription of DNA into RNA using the four ribonucleoside triphosphates as substrates. This Psychrobacter sp. (strain PRwf-1) protein is DNA-directed RNA polymerase subunit beta.